Reading from the N-terminus, the 378-residue chain is Cytochrome P450 monooxygenase pytD (378 aa).

C321 lines the heme pocket.

The protein belongs to the cytochrome P450 family. Requires heme as cofactor.

Its pathway is secondary metabolite biosynthesis. Functionally, cytochrome P450 monooxygenase pytD; part of the gene cluster that mediates the biosynthesis of pyranterreones, a family of antioxidative compounds. The first step of pyranonigrins biosynthesis is performed by the hybrid PKS-NRPS synthetase pytA that condenses 4 malonyl-CoA units ato the acetyl starter unit by the modular PKS of pytA. The acyl chain is then connected to an L-serine through the amide bond by the modular NRPS of pytA. A tetramic acid is formed and released from the PKS-NRPS pytA to give pyranterreone 5 with the help of the thioesterase pytI. Pyranterreone 5 could be methylated by pytC to afford pyranterreone 6. Both pyranterreones 5 and 6 are subsequently oxidized by the FAD-linked oxidoreductase pytB and the cytochrome P450 monooxygenase pytD to form the fused gamma-pyrone core, resulting in pyranterreones 7 and 11, respectively. The hydroxy group at C-8 of pyranterreones 7 and 11 are dehydrated by the aspartyl protease pytH to form a delta-7 double bond to give pyranterreones 3 and 1, 2 accordingly. The exo-methylene of pyranterreone 3 could be reduced into a pendant methyl by reductase pytE to provide pyranterreone 4, also known as cordylactam. Pyranterreone 4 can be reconverted to pyranterreone 3 through pytB-catalyzed dehydrogenation or further oxidized to pyranterreones 9 and 10. This is Cytochrome P450 monooxygenase pytD from Aspergillus terreus (strain NIH 2624 / FGSC A1156).